Consider the following 513-residue polypeptide: ATP synthase subunit alpha (513 aa).

169–176 (GDRQTGKT) contacts ATP.

This sequence belongs to the ATPase alpha/beta chains family. In terms of assembly, F-type ATPases have 2 components, CF(1) - the catalytic core - and CF(0) - the membrane proton channel. CF(1) has five subunits: alpha(3), beta(3), gamma(1), delta(1), epsilon(1). CF(0) has three main subunits: a(1), b(2) and c(9-12). The alpha and beta chains form an alternating ring which encloses part of the gamma chain. CF(1) is attached to CF(0) by a central stalk formed by the gamma and epsilon chains, while a peripheral stalk is formed by the delta and b chains.

It is found in the cell inner membrane. The enzyme catalyses ATP + H2O + 4 H(+)(in) = ADP + phosphate + 5 H(+)(out). Its function is as follows. Produces ATP from ADP in the presence of a proton gradient across the membrane. The alpha chain is a regulatory subunit. This is ATP synthase subunit alpha from Haemophilus influenzae (strain PittEE).